The chain runs to 506 residues: Ribose import ATP-binding protein RbsA 2 (506 aa).

ABC transporter domains lie at 5–241 and 254–498; these read LRLS…VGRR and ADAP…TAGT. An ATP-binding site is contributed by 37–44; it reads GENGAGKS.

Belongs to the ABC transporter superfamily. Ribose importer (TC 3.A.1.2.1) family. As to quaternary structure, the complex is composed of an ATP-binding protein (RbsA), two transmembrane proteins (RbsC) and a solute-binding protein (RbsB).

Its subcellular location is the cell inner membrane. It carries out the reaction D-ribose(out) + ATP + H2O = D-ribose(in) + ADP + phosphate + H(+). In terms of biological role, part of the ABC transporter complex RbsABC involved in ribose import. Responsible for energy coupling to the transport system. This Burkholderia cenocepacia (strain HI2424) protein is Ribose import ATP-binding protein RbsA 2.